The sequence spans 711 residues: Ribosomal RNA large subunit methyltransferase K/L (711 aa).

One can recognise a THUMP domain in the interval 43-154 (TLYRTLLWSR…RENLVISLDL (112 aa)).

Belongs to the methyltransferase superfamily. RlmKL family.

The protein localises to the cytoplasm. It carries out the reaction guanosine(2445) in 23S rRNA + S-adenosyl-L-methionine = N(2)-methylguanosine(2445) in 23S rRNA + S-adenosyl-L-homocysteine + H(+). It catalyses the reaction guanosine(2069) in 23S rRNA + S-adenosyl-L-methionine = N(2)-methylguanosine(2069) in 23S rRNA + S-adenosyl-L-homocysteine + H(+). Its function is as follows. Specifically methylates the guanine in position 2445 (m2G2445) and the guanine in position 2069 (m7G2069) of 23S rRNA. The protein is Ribosomal RNA large subunit methyltransferase K/L of Haemophilus influenzae (strain PittEE).